A 100-amino-acid chain; its full sequence is Urease subunit gamma (100 aa).

This sequence belongs to the urease gamma subunit family. In terms of assembly, heterotrimer of UreA (gamma), UreB (beta) and UreC (alpha) subunits. Three heterotrimers associate to form the active enzyme.

The protein resides in the cytoplasm. It carries out the reaction urea + 2 H2O + H(+) = hydrogencarbonate + 2 NH4(+). The protein operates within nitrogen metabolism; urea degradation; CO(2) and NH(3) from urea (urease route): step 1/1. The sequence is that of Urease subunit gamma from Pseudomonas fluorescens (strain Pf0-1).